We begin with the raw amino-acid sequence, 360 residues long: Uptake hydrogenase small subunit (360 aa).

The segment at residues Met1 to Ala43 is a signal peptide (tat-type signal). 8 residues coordinate [4Fe-4S] cluster: Cys60, Cys63, Cys158, Cys192, His230, Cys233, Cys258, and Cys264. [3Fe-4S] cluster is bound by residues Cys273, Cys292, and Cys295.

Belongs to the [NiFe]/[NiFeSe] hydrogenase small subunit family. Heterodimer of a large and a small subunit. It depends on [4Fe-4S] cluster as a cofactor. [3Fe-4S] cluster is required as a cofactor. Predicted to be exported by the Tat system. The position of the signal peptide cleavage has been experimentally proven.

The protein localises to the cell membrane. The catalysed reaction is H2 + A = AH2. In terms of biological role, this enzyme recycles the H(2) produced by nitrogenase to increase the production of ATP and to protect nitrogenase against inhibition or damage by O(2) under carbon- or phosphate-limited conditions. The polypeptide is Uptake hydrogenase small subunit (hoxK) (Cupriavidus necator (strain ATCC 17699 / DSM 428 / KCTC 22496 / NCIMB 10442 / H16 / Stanier 337) (Ralstonia eutropha)).